Reading from the N-terminus, the 1111-residue chain is Nuclear migration and anchoring protein unc-84 (1111 aa).

Topologically, residues 1-509 (MAPATEADNN…LTDKKSSKFS (509 aa)) are nuclear. Required for nuclear envelope localization regions lie at residues 118–244 (YILR…SQTL) and 503–507 (KKSSK). The tract at residues 232 to 253 (ERASRMTTRSQTLERSRKFDGL) is disordered. Residues 243–252 (TLERSRKFDG) show a composition bias toward basic and acidic residues. A helical membrane pass occupies residues 510–530 (WCQILGLLLALLFAIFLLGFL). Residues 531–1111 (TSDNTAIRVK…LRVHGKVVQV (581 aa)) are Perinuclear space-facing. The interaction with zyg-12 stretch occupies residues 912–1111 (QYDKNHLEAI…LRVHGKVVQV (200 aa)). Residues 945-1109 (GGAVVSTRCS…YRLRVHGKVV (165 aa)) form the SUN domain.

In terms of assembly, component of the unc-83-unc-84 LINC complex which contains at least unc-83 and unc-84. Within the unc-83-unc-84 LINC complex interacts (via C-terminus) with unc-83; the interaction is probably required to recruit unc-83 to the nuclear membrane. Most likely interacts with anc-1; the interaction is probably required to recruit anc-1 to the nuclear envelope. Interacts (via C-terminus) with zyg-12 (via C-terminus); the interaction is direct. May interact with lmn-1; this interaction may be required to complete the connection between the nuclear lamina and the cytoskeleton. As to expression, expressed in all somatic cells. Not expressed in germ cells in the mitotic and transition zones of the gonad. One study shows expression at the beginning of the late pachytene stage in the proximal gonad, but there is no expression in the male germline, suggesting expression is specific to oogenesis in hermaphrodites.

It is found in the nucleus inner membrane. Its subcellular location is the cytoplasm. The protein resides in the cytoskeleton. Its function is as follows. Involved in nuclear migration and anchoring in hypodermal precursor cells. Most likely recruits anc-1 to the nuclear envelope where anc-1 functions to tether the nucleus to the actin cytoskeleton. Component of the unc-83-unc-84 LINC (LInker of Nucleoskeleton and Cytoskeleton) complex where it recruits and interacts with unc-83 to form a bridge connecting the nuclear envelope to the cytoskeleton which allows for nuclear transport along microtubules. Its role in nuclear migration may be in association with lamin, lmn-1. Regulates nuclear migrations in one-cell embryos, controlling the posterior migration of the male pronucleus following fertilization. Not required for centrosome attachment to the nucleus. Plays a role in the maintenance of the nuclear envelope architecture in body wall muscle cells. May be involved in DNA damage repair through an association with zyg-12. Potentially has roles in homologous recombination, double strand break repair and meiotic recombination. Specifically, may in part inhibit non-homologous end joining repair, most likely through recruiting fan-1 to the nucleoplasm, to facilitate the repair of DNA cross-links. This chain is Nuclear migration and anchoring protein unc-84, found in Caenorhabditis elegans.